We begin with the raw amino-acid sequence, 379 residues long: UDP-4-amino-4-deoxy-L-arabinose--oxoglutarate aminotransferase (379 aa).

Lysine 182 carries the N6-(pyridoxal phosphate)lysine modification.

Belongs to the DegT/DnrJ/EryC1 family. ArnB subfamily. Homodimer. The cofactor is pyridoxal 5'-phosphate.

It carries out the reaction UDP-4-amino-4-deoxy-beta-L-arabinose + 2-oxoglutarate = UDP-beta-L-threo-pentopyranos-4-ulose + L-glutamate. It functions in the pathway nucleotide-sugar biosynthesis; UDP-4-deoxy-4-formamido-beta-L-arabinose biosynthesis; UDP-4-deoxy-4-formamido-beta-L-arabinose from UDP-alpha-D-glucuronate: step 2/3. Its pathway is bacterial outer membrane biogenesis; lipopolysaccharide biosynthesis. Its function is as follows. Catalyzes the conversion of UDP-4-keto-arabinose (UDP-Ara4O) to UDP-4-amino-4-deoxy-L-arabinose (UDP-L-Ara4N). The modified arabinose is attached to lipid A and is required for resistance to polymyxin and cationic antimicrobial peptides. The chain is UDP-4-amino-4-deoxy-L-arabinose--oxoglutarate aminotransferase from Sodalis glossinidius (strain morsitans).